Here is a 366-residue protein sequence, read N- to C-terminus: Methyltransferase phm5 (366 aa).

Residues 204-205, Asp230, 255-256, Arg273, and Arg274 contribute to the S-adenosyl-L-methionine site; these read GG and SM.

Belongs to the class I-like SAM-binding methyltransferase superfamily. Cation-independent O-methyltransferase family.

It participates in secondary metabolite biosynthesis. In terms of biological role, methyltransferase; part of the gene cluster that mediates the biosynthesis of the trans-fused decalin-containing tetramic acid phomasetin, the stereochemical opposite of the HIV-1 integrase inhibitor equisetin. The PKS module of phm1 together with the enoylreductase phm4 catalyze the formation of the polyketide unit which is then conjugated to L-serine by the condensation domain of the phm1 NRPS module. Activity of the Dieckmann cyclase domain (RED) of phm1 results in release of the Dieckmann product intermediate. The Diels-Alderase phm7 then uses the Dieckmann product of phm1 as substrate and catalyzes the Diels-Alder cycloaddition to form the decalin ring of N-desmethylphomasetin. N-desmethylphomasetin is further methylated to phomasetin by the methyltransferase phm5. This Pyrenochaetopsis sp protein is Methyltransferase phm5.